The sequence spans 195 residues: Imidazoleglycerol-phosphate dehydratase (195 aa).

The protein belongs to the imidazoleglycerol-phosphate dehydratase family.

The protein resides in the cytoplasm. The catalysed reaction is D-erythro-1-(imidazol-4-yl)glycerol 3-phosphate = 3-(imidazol-4-yl)-2-oxopropyl phosphate + H2O. It functions in the pathway amino-acid biosynthesis; L-histidine biosynthesis; L-histidine from 5-phospho-alpha-D-ribose 1-diphosphate: step 6/9. This Aromatoleum aromaticum (strain DSM 19018 / LMG 30748 / EbN1) (Azoarcus sp. (strain EbN1)) protein is Imidazoleglycerol-phosphate dehydratase.